The chain runs to 202 residues: Uclacyanin-2 (202 aa).

The first 29 residues, 1–29 (MAMNGLSKMAVAAATALLLVLTIVPGAVA), serve as a signal peptide directing secretion. The Phytocyanin domain maps to 30–126 (VTYTIEWTTG…GMKLAVNVVA (97 aa)). His65 serves as a coordination point for Cu cation. A glycan (N-linked (GlcNAc...) asparagine) is linked at Asn86. Cu cation-binding residues include Cys106, His111, and Met118. Positions 129–181 (AGPPATPTPPSSTPGTPTTPESPPSGGSPTPTTPTPGAGSTSPPPPPKASGAS) are disordered. Residues 141–169 (TPGTPTTPESPPSGGSPTPTTPTPGAGST) are compositionally biased toward low complexity. The GPI-anchor amidated serine moiety is linked to residue Ser178. A propeptide spans 179–202 (GASKGVMSYVLVGVSMVLGYGLWM) (removed in mature form).

Its subcellular location is the cell membrane. Functionally, probably acts as an electron carrier involved in oxygen activation and/or lignin formation. In Arabidopsis thaliana (Mouse-ear cress), this protein is Uclacyanin-2.